Here is a 512-residue protein sequence, read N- to C-terminus: MKIHLSTLDPAQLETDALIVLAIDGGDKDNNKPQLQAKSDAFAKAAADLIASKEITGKLLEIATLHKPEGVKAKRLIVVGVGKAKSFTSYELRKAAGAAVRALKKSVKSAAIVAPENWGGAADPSTTSTLMFERGGLPEAVKAIAEGAVVANPDYNYYHSDRKTYELDELTILVPANGHANDLEAAMKEGHVIGESQNFTRDLVNEPGNRMTPTILGQRAKKMAEEVGIQCDVYSTDFLHEKKMGAFWSVSQGSEEPPALIVMKYEPAGAPQSPVLGLVGKGITFDTGGISIKPADGMEKMKYDMAGGAAMIGAMRAIALLKPNVRVIGVVCAAENMPSGKAQKPGDVQIAMSGKSIEIINTDAEGRLVLADGLHYAKQLGATHLIDAATLTGACMVALGGINAGVFANDEDYFNRFAEALKKSGEKMWRLPIDDDYKELIKSPIADIKNTGGRYGGAITAAMFLKEFVGETPWIHLDIAGVAWQEEAVPFLAKGPSGIAVRSIIELVQSFG.

Mn(2+) is bound by residues Lys-281 and Asp-286. The active site involves Lys-293. Asp-304, Asp-363, and Glu-365 together coordinate Mn(2+). Arg-367 is an active-site residue.

The protein belongs to the peptidase M17 family. It depends on Mn(2+) as a cofactor.

The protein resides in the cytoplasm. The catalysed reaction is Release of an N-terminal amino acid, Xaa-|-Yaa-, in which Xaa is preferably Leu, but may be other amino acids including Pro although not Arg or Lys, and Yaa may be Pro. Amino acid amides and methyl esters are also readily hydrolyzed, but rates on arylamides are exceedingly low.. It catalyses the reaction Release of an N-terminal amino acid, preferentially leucine, but not glutamic or aspartic acids.. Its function is as follows. Presumably involved in the processing and regular turnover of intracellular proteins. Catalyzes the removal of unsubstituted N-terminal amino acids from various peptides. This Koribacter versatilis (strain Ellin345) protein is Probable cytosol aminopeptidase.